The following is a 489-amino-acid chain: UDP-N-acetylmuramoylalanine--D-glutamate ligase (489 aa).

Residue 126-132 (GTNGKTT) participates in ATP binding.

Belongs to the MurCDEF family.

The protein resides in the cytoplasm. It catalyses the reaction UDP-N-acetyl-alpha-D-muramoyl-L-alanine + D-glutamate + ATP = UDP-N-acetyl-alpha-D-muramoyl-L-alanyl-D-glutamate + ADP + phosphate + H(+). Its pathway is cell wall biogenesis; peptidoglycan biosynthesis. Its function is as follows. Cell wall formation. Catalyzes the addition of glutamate to the nucleotide precursor UDP-N-acetylmuramoyl-L-alanine (UMA). The protein is UDP-N-acetylmuramoylalanine--D-glutamate ligase of Mycolicibacterium paratuberculosis (strain ATCC BAA-968 / K-10) (Mycobacterium paratuberculosis).